Here is a 441-residue protein sequence, read N- to C-terminus: Xaa-Pro dipeptidase (441 aa).

Mn(2+) is bound by residues Asp244, Asp255, His336, Glu381, and Glu420.

Belongs to the peptidase M24B family. Bacterial-type prolidase subfamily. It depends on Mn(2+) as a cofactor.

It carries out the reaction Xaa-L-Pro dipeptide + H2O = an L-alpha-amino acid + L-proline. Its function is as follows. Splits dipeptides with a prolyl residue in the C-terminal position. The polypeptide is Xaa-Pro dipeptidase (Xanthomonas euvesicatoria pv. vesicatoria (strain 85-10) (Xanthomonas campestris pv. vesicatoria)).